The primary structure comprises 179 residues: Guanosine-3',5'-bis(diphosphate) 3'-pyrophosphohydrolase MESH1 (179 aa).

G2 is modified (N-acetylglycine). K25 is modified (N6-acetyllysine). The HD domain occupies 32 to 127 (YINHPIGVAR…VKLADKLYNL (96 aa)). Positions 35, 61, and 62 each coordinate Mn(2+). Active-site nucleophile residues include E65 and D66. The residue at position 97 (K97) is an N6-acetyllysine. A Mn(2+)-binding site is contributed by D122. Position 123 is an N6-acetyllysine (K123).

The protein belongs to the MESH1 family. Mn(2+) is required as a cofactor.

It carries out the reaction guanosine 3',5'-bis(diphosphate) + H2O = GDP + diphosphate + H(+). In terms of biological role, ppGpp hydrolyzing enzyme involved in starvation response. In Homo sapiens (Human), this protein is Guanosine-3',5'-bis(diphosphate) 3'-pyrophosphohydrolase MESH1 (HDDC3).